Here is a 495-residue protein sequence, read N- to C-terminus: Keratin, type II cuticular 87 (495 aa).

Residues 1 to 111 form a head region; it reads MSCFSSRLGA…PNAQCVKHEE (111 aa). Residues 111–422 enclose the IF rod domain; it reads EKEQIKCLNS…RLLEGEEQRL (312 aa). The interval 112-146 is coil 1A; that stretch reads KEQIKCLNSKFAAFIDKVRFLEQQNKLLETKWQFY. Residues 147–156 are linker 1; that stretch reads QNRKCCESNM. Residues 157-257 are coil 1B; it reads EPLFEGYIEA…YEEETRLLHS (101 aa). Positions 258–274 are linker 12; it reads HISDTSVVVKMDNSRDL. The tract at residues 275–418 is coil 2; it reads NMDCVVAEIK…ITYRRLLEGE (144 aa). Positions 419–494 are tail; that stretch reads EQRLCEGVGS…TCGSSRSVRF (76 aa).

It belongs to the intermediate filament family. As to quaternary structure, heterotetramer of two type I and two type II keratins.

This chain is Keratin, type II cuticular 87, found in Mus musculus (Mouse).